Here is a 226-residue protein sequence, read N- to C-terminus: ATP synthase F(0) complex subunit a (226 aa).

A run of 6 helical transmembrane segments spans residues 6-26 (FASF…IVLF), 68-88 (WALM…LGLL), 97-117 (QLSM…ITGF), 138-158 (IPML…ALAV), 164-184 (ITAG…LMSI), and 189-209 (ALIT…VAMI).

The protein belongs to the ATPase A chain family. Component of the ATP synthase complex composed at least of ATP5F1A/subunit alpha, ATP5F1B/subunit beta, ATP5MC1/subunit c (homooctomer), MT-ATP6/subunit a, MT-ATP8/subunit 8, ATP5ME/subunit e, ATP5MF/subunit f, ATP5MG/subunit g, ATP5MK/subunit k, ATP5MJ/subunit j, ATP5F1C/subunit gamma, ATP5F1D/subunit delta, ATP5F1E/subunit epsilon, ATP5PF/subunit F6, ATP5PB/subunit b, ATP5PD/subunit d, ATP5PO/subunit OSCP. ATP synthase complex consists of a soluble F(1) head domain (subunits alpha(3) and beta(3)) - the catalytic core - and a membrane F(0) domain - the membrane proton channel (subunits c, a, 8, e, f, g, k and j). These two domains are linked by a central stalk (subunits gamma, delta, and epsilon) rotating inside the F1 region and a stationary peripheral stalk (subunits F6, b, d, and OSCP). Interacts with DNAJC30; interaction is direct.

The protein localises to the mitochondrion inner membrane. It carries out the reaction H(+)(in) = H(+)(out). In terms of biological role, subunit a, of the mitochondrial membrane ATP synthase complex (F(1)F(0) ATP synthase or Complex V) that produces ATP from ADP in the presence of a proton gradient across the membrane which is generated by electron transport complexes of the respiratory chain. ATP synthase complex consist of a soluble F(1) head domain - the catalytic core - and a membrane F(1) domain - the membrane proton channel. These two domains are linked by a central stalk rotating inside the F(1) region and a stationary peripheral stalk. During catalysis, ATP synthesis in the catalytic domain of F(1) is coupled via a rotary mechanism of the central stalk subunits to proton translocation. With the subunit c (ATP5MC1), forms the proton-conducting channel in the F(0) domain, that contains two crucial half-channels (inlet and outlet) that facilitate proton movement from the mitochondrial intermembrane space (IMS) into the matrix. Protons are taken up via the inlet half-channel and released through the outlet half-channel, following a Grotthuss mechanism. This Ovis aries (Sheep) protein is ATP synthase F(0) complex subunit a.